The primary structure comprises 188 residues: Guanylate kinase (188 aa).

In terms of domain architecture, Guanylate kinase-like spans Thr-2–Ala-183. Ala-9–Ser-16 serves as a coordination point for ATP.

It belongs to the guanylate kinase family.

The protein localises to the cytoplasm. The catalysed reaction is GMP + ATP = GDP + ADP. Functionally, essential for recycling GMP and indirectly, cGMP. This chain is Guanylate kinase, found in Porphyromonas gingivalis (strain ATCC BAA-308 / W83).